The following is an 811-amino-acid chain: Lysine-specific histone demethylase 1 homolog 3 (811 aa).

The span at 1–10 (MSDQPPPYTP) shows a compositional bias: pro residues. The disordered stretch occupies residues 1–79 (MSDQPPPYTP…PSAQPPPRAS (79 aa)). The span at 44–55 (NKRKRTGFRRKL) shows a compositional bias: basic residues. A compositionally biased stretch (low complexity) spans 56-71 (PSGSPAAPVAVAASPS). Residues 88–189 (NREPTAEAVT…FGVAPAIKER (102 aa)) form the SWIRM domain. FAD contacts are provided by E227, R229, R235, and E609. A disordered region spans residues 790-811 (RNSSRTKTRPSKLKIGIPKSKS).

It belongs to the flavin monoamine oxidase family. FAD serves as cofactor.

In terms of biological role, probable histone demethylase. The protein is Lysine-specific histone demethylase 1 homolog 3 of Oryza sativa subsp. japonica (Rice).